Reading from the N-terminus, the 225-residue chain is MKKFFIIGTDTEVGKTYISTKLIEVCEHQNIKSLCLKPVASGQSQFSELCEDVESILNAYKHKFTAAEINLISFNQAVAPHIIAAKTKVDISIGNLKQFIENKYNQDLDILFIEGAGGLLTPYSDHTTQLDLIKALEIPVILVSAIKVGCINHTLLTINELGRHNIKLAGWIANCNDSNIKYTDEQISTIEELSGYKCSTKISQNADYLDFIDLSKILISPEENE.

12 to 17 (EVGKTY) provides a ligand contact to ATP. A Mg(2+)-binding site is contributed by Thr-16. Lys-37 is an active-site residue. Ser-41 contacts substrate. Residues Asp-52, 114-117 (EGAG), and 174-175 (NC) each bind ATP. The Mg(2+) site is built by Asp-52 and Glu-114.

Belongs to the dethiobiotin synthetase family. In terms of assembly, homodimer. Mg(2+) is required as a cofactor.

The protein resides in the cytoplasm. The catalysed reaction is (7R,8S)-7,8-diammoniononanoate + CO2 + ATP = (4R,5S)-dethiobiotin + ADP + phosphate + 3 H(+). It participates in cofactor biosynthesis; biotin biosynthesis; biotin from 7,8-diaminononanoate: step 1/2. In terms of biological role, catalyzes a mechanistically unusual reaction, the ATP-dependent insertion of CO2 between the N7 and N8 nitrogen atoms of 7,8-diaminopelargonic acid (DAPA, also called 7,8-diammoniononanoate) to form a ureido ring. The polypeptide is ATP-dependent dethiobiotin synthetase BioD (Francisella tularensis subsp. novicida (strain U112)).